We begin with the raw amino-acid sequence, 515 residues long: MSKNPYEIEIIQKTAPYHPDPTMIFNHLCASRPGTLLLETAEVNKKRDLESIMIIDSAMRISSEDNSVKLTPLSINGTDILSTLKKTIPKKIEIYEKNNSTILVFPKIKKNIDEDKKLFSLSVFDAFRLMIRIFENREKKSKAMFFGGLFSYDLISVFESLPKLKGNQKCSNFCFYLAETLLVLDHQKKTCLIQNSLFSKNLKERKRIKKRSVEIERKLNEKLKLIPKTKIKDINLTSNMNNFEYGTIIKKLQKLIQKGEIFQVVPSRKFYLPCPNPLSAYQKLKKSNPSPYMFFMQDQDFTLFGASPESSLKYDEKTRKIELYPIAGTRPRGKTEDGNLDLDLDSRIELEMRTNHKELAEHLMLVDLARNDLARICKPGSRYVSDLVRVDRYSHVMHLVSRVIGELREGLDALHAYASCMNMGTLTGAPKVRAMQLIAEHEGEKRGSYGGAIGYFTDLGNLDTCITIRSAYVEKQVATIQAGAGIVYNSIPENEVNESLNKAQAVINAIKNAHY.

L-tryptophan-binding positions include threonine 40 and 291 to 293; that span reads PYM. A chorismate-binding site is contributed by 328 to 329; it reads GT. Glutamate 361 is a Mg(2+) binding site. Chorismate is bound by residues tyrosine 449, arginine 469, 483 to 485, and glycine 485; that span reads GAG. Glutamate 498 provides a ligand contact to Mg(2+).

The protein belongs to the anthranilate synthase component I family. Heterotetramer consisting of two non-identical subunits: a beta subunit (TrpG) and a large alpha subunit (TrpE). Mg(2+) serves as cofactor.

It catalyses the reaction chorismate + L-glutamine = anthranilate + pyruvate + L-glutamate + H(+). It participates in amino-acid biosynthesis; L-tryptophan biosynthesis; L-tryptophan from chorismate: step 1/5. With respect to regulation, feedback inhibited by tryptophan. Part of a heterotetrameric complex that catalyzes the two-step biosynthesis of anthranilate, an intermediate in the biosynthesis of L-tryptophan. In the first step, the glutamine-binding beta subunit (TrpG) of anthranilate synthase (AS) provides the glutamine amidotransferase activity which generates ammonia as a substrate that, along with chorismate, is used in the second step, catalyzed by the large alpha subunit of AS (TrpE) to produce anthranilate. In the absence of TrpG, TrpE can synthesize anthranilate directly from chorismate and high concentrations of ammonia. The protein is Anthranilate synthase component 1 (trpE) of Buchnera aphidicola subsp. Schizaphis graminum (strain Sg).